Reading from the N-terminus, the 682-residue chain is UvrABC system protein B (682 aa).

The region spanning 27–414 (DNIRAGVAHQ…SEGIVVEQII (388 aa)) is the Helicase ATP-binding domain. 40–47 (GVTGSGKT) contributes to the ATP binding site. The Beta-hairpin motif lies at 93–116 (YYDYYQPEAYVPTSDTYIEKDSSI). In terms of domain architecture, Helicase C-terminal spans 432–594 (QMEDLMTECR…IEPVSVRKSL (163 aa)). The segment at 609–628 (AAKGRGKGRGRQAAPAQTAA) is disordered. One can recognise a UVR domain in the interval 642–677 (GGLIQRLEREMRESARDLEFEKAAELRDRIRMLRER).

It belongs to the UvrB family. Forms a heterotetramer with UvrA during the search for lesions. Interacts with UvrC in an incision complex.

It localises to the cytoplasm. The UvrABC repair system catalyzes the recognition and processing of DNA lesions. A damage recognition complex composed of 2 UvrA and 2 UvrB subunits scans DNA for abnormalities. Upon binding of the UvrA(2)B(2) complex to a putative damaged site, the DNA wraps around one UvrB monomer. DNA wrap is dependent on ATP binding by UvrB and probably causes local melting of the DNA helix, facilitating insertion of UvrB beta-hairpin between the DNA strands. Then UvrB probes one DNA strand for the presence of a lesion. If a lesion is found the UvrA subunits dissociate and the UvrB-DNA preincision complex is formed. This complex is subsequently bound by UvrC and the second UvrB is released. If no lesion is found, the DNA wraps around the other UvrB subunit that will check the other stand for damage. The sequence is that of UvrABC system protein B from Oleidesulfovibrio alaskensis (strain ATCC BAA-1058 / DSM 17464 / G20) (Desulfovibrio alaskensis).